A 414-amino-acid polypeptide reads, in one-letter code: Serine hydroxymethyltransferase (414 aa).

(6S)-5,6,7,8-tetrahydrofolate contacts are provided by residues leucine 121 and 125-127; that span reads GHL. Lysine 229 carries the N6-(pyridoxal phosphate)lysine modification.

This sequence belongs to the SHMT family. In terms of assembly, homodimer. It depends on pyridoxal 5'-phosphate as a cofactor.

It localises to the cytoplasm. It carries out the reaction (6R)-5,10-methylene-5,6,7,8-tetrahydrofolate + glycine + H2O = (6S)-5,6,7,8-tetrahydrofolate + L-serine. Its pathway is one-carbon metabolism; tetrahydrofolate interconversion. It functions in the pathway amino-acid biosynthesis; glycine biosynthesis; glycine from L-serine: step 1/1. In terms of biological role, catalyzes the reversible interconversion of serine and glycine with tetrahydrofolate (THF) serving as the one-carbon carrier. This reaction serves as the major source of one-carbon groups required for the biosynthesis of purines, thymidylate, methionine, and other important biomolecules. Also exhibits THF-independent aldolase activity toward beta-hydroxyamino acids, producing glycine and aldehydes, via a retro-aldol mechanism. This Polaromonas naphthalenivorans (strain CJ2) protein is Serine hydroxymethyltransferase.